The sequence spans 625 residues: tRNA-guanine(15) transglycosylase (625 aa).

The Nucleophile role is filled by Asp-86. Residues Asp-121 and Gly-184 each contribute to the substrate site. One can recognise a PUA domain in the interval 546–621; that stretch reads GLRVVVDDES…VAVKVHEGVN (76 aa).

The protein belongs to the archaeosine tRNA-ribosyltransferase family. The cofactor is Zn(2+).

It carries out the reaction guanosine(15) in tRNA + 7-cyano-7-deazaguanine = 7-cyano-7-carbaguanosine(15) in tRNA + guanine. It functions in the pathway tRNA modification; archaeosine-tRNA biosynthesis. Functionally, exchanges the guanine residue with 7-cyano-7-deazaguanine (preQ0) at position 15 in the dihydrouridine loop (D-loop) of archaeal tRNAs. The chain is tRNA-guanine(15) transglycosylase from Picrophilus torridus (strain ATCC 700027 / DSM 9790 / JCM 10055 / NBRC 100828 / KAW 2/3).